The primary structure comprises 424 residues: Serine--tRNA ligase (424 aa).

L-serine is bound at residue 230 to 232; sequence TAE. 261–263 is a binding site for ATP; the sequence is RSE. Glu284 lines the L-serine pocket. Residue 348–351 coordinates ATP; sequence EISS. Ser384 contacts L-serine.

Belongs to the class-II aminoacyl-tRNA synthetase family. Type-1 seryl-tRNA synthetase subfamily. Homodimer. The tRNA molecule binds across the dimer.

It is found in the cytoplasm. It carries out the reaction tRNA(Ser) + L-serine + ATP = L-seryl-tRNA(Ser) + AMP + diphosphate + H(+). The enzyme catalyses tRNA(Sec) + L-serine + ATP = L-seryl-tRNA(Sec) + AMP + diphosphate + H(+). It participates in aminoacyl-tRNA biosynthesis; selenocysteinyl-tRNA(Sec) biosynthesis; L-seryl-tRNA(Sec) from L-serine and tRNA(Sec): step 1/1. Functionally, catalyzes the attachment of serine to tRNA(Ser). Is also able to aminoacylate tRNA(Sec) with serine, to form the misacylated tRNA L-seryl-tRNA(Sec), which will be further converted into selenocysteinyl-tRNA(Sec). The polypeptide is Serine--tRNA ligase (Streptococcus pneumoniae (strain JJA)).